The following is a 95-amino-acid chain: Co-chaperonin GroES (95 aa).

It belongs to the GroES chaperonin family. Heptamer of 7 subunits arranged in a ring. Interacts with the chaperonin GroEL.

Its subcellular location is the cytoplasm. Its function is as follows. Together with the chaperonin GroEL, plays an essential role in assisting protein folding. The GroEL-GroES system forms a nano-cage that allows encapsulation of the non-native substrate proteins and provides a physical environment optimized to promote and accelerate protein folding. GroES binds to the apical surface of the GroEL ring, thereby capping the opening of the GroEL channel. The polypeptide is Co-chaperonin GroES (Jannaschia sp. (strain CCS1)).